The sequence spans 698 residues: Transferrin-binding protein B (698 aa).

The first 20 residues, 1–20, serve as a signal peptide directing secretion; that stretch reads MNNPLVNQAAMVLPVFLLSA. Cys21 carries the N-palmitoyl cysteine lipid modification. Cys21 carries the S-diacylglycerol cysteine lipid modification. Disordered regions lie at residues 33 to 58, 83 to 102, 294 to 324, 349 to 383, 428 to 479, and 669 to 698; these read VDTE…QKDQ, IKLS…KNPS, FSGK…SLSG, GSAK…SENS, ESGK…GDAN, and TKNA…KPVQ. Over residues 46–56 the composition is skewed to polar residues; it reads DVSSEKPQAQK. The span at 299-315 shows a compositional bias: basic and acidic residues; it reads EATDKPKNDGETKEHPF. Positions 369–383 are enriched in low complexity; it reads AAASNGAAGTSSENS. Residues 460-476 are compositionally biased toward polar residues; that stretch reads QAGTAENGNPAASNTAG. Low complexity predominate over residues 671–686; sequence NATDASGNGNSASSAT.

Belongs to the TbpB family. As to quaternary structure, binds only human holo-transferrin (TF), via the TF C-terminus. Forms a large complex with TbpA and TF. Interacts via its C-terminal domain with Slam1.

It is found in the cell outer membrane. The protein resides in the cell surface. Its function is as follows. Neisseria acquires iron by extracting it from serum transferrin (TF) in its human host. Acts as a TF receptor and is required for TF utilization. Involved in the initial capture of TF. Helps select only those TF molecules that can be used as an iron source and concentrates them on the cell surface, maintaining the iron-loaded status of the TF C-terminal lobe until its delivery to TbpA. The sequence is that of Transferrin-binding protein B from Neisseria meningitidis serogroup A / serotype 4A (strain DSM 15465 / Z2491).